The following is a 126-amino-acid chain: Pancreatic polypeptide prohormone (126 aa).

The signal sequence occupies residues 1–26 (MTATRCCLWLLLLGTCMALLLPEAWG). Tyr-62 carries the post-translational modification Tyrosine amide. Positions 77-126 (RQSHAAAPGGSHRHPPAGLPAAKGGTGVSGSPPKPWDCLPCRAHSLPSQS) are disordered.

Belongs to the NPY family. No icosapeptide-like peptide is cleaved from the C-terminal.

The protein resides in the secreted. In terms of biological role, hormone secreted by pancreatic cells that acts as a regulator of pancreatic and gastrointestinal functions probably by signaling through the G protein-coupled receptor NPY4R2. This Cavia porcellus (Guinea pig) protein is Pancreatic polypeptide prohormone (PPY).